Here is a 593-residue protein sequence, read N- to C-terminus: Sodium-independent sulfate anion transporter (593 aa).

Topologically, residues 1–34 are extracellular; that stretch reads MAPDTCCCSATALRRRLPVLAWVPDYSLQWLRLD. Residues 35–55 traverse the membrane as a helical segment; sequence FIAGLSVGLTVIPQALAYAEV. A topological domain (cytoplasmic) is located at residue Ala-56. A helical transmembrane segment spans residues 57-77; that stretch reads GLPPQYGLYSAFMGCFVYFFL. Topologically, residues 78–82 are extracellular; sequence GTSRD. A helical membrane pass occupies residues 83-100; sequence VTLGPTAIMSLLVSFYTF. Over 101-106 the chain is Cytoplasmic; sequence REPAYA. A helical transmembrane segment spans residues 107–127; that stretch reads VLLAFLSGCIQLAMGLLHLGF. At 128 to 176 the chain is on the extracellular side; it reads LLDFISCPVIKGFTSAASITIGFGQIKNLLGLQKIPRQFFLQVYHTFLH. The helical transmembrane segment at 177 to 197 threads the bilayer; the sequence is IGETRVGDAVLGLASMLLLLV. The Cytoplasmic portion of the chain corresponds to 198 to 233; that stretch reads LKCMREHMPPPHPEMPLAVKFSRGLVWTVTTARNAL. A helical transmembrane segment spans residues 234–254; that stretch reads VVSSAALIAYAFEVTGSHPFV. Residues 255–287 lie on the Extracellular side of the membrane; it reads LTGKIAEGLPPVRIPPFSVTRDNKTISFSEMVQ. The helical transmembrane segment at 288–308 threads the bilayer; that stretch reads DMGAGLAVVPLMGLLESIAVA. Residues 309-324 are Cytoplasmic-facing; the sequence is KSFASQNNYRIDANQE. Residues 325–345 form a helical membrane-spanning segment; the sequence is LLAIGLTNVLGSLVSSYPVTG. Over 346 to 361 the chain is Extracellular; that stretch reads SFGRTAVNAQTGVCTP. A helical membrane pass occupies residues 362–382; that stretch reads AGGLVTGALVLLSLNYLTSLF. A topological domain (cytoplasmic) is located at residue Ser-383. A helical transmembrane segment spans residues 384–404; that stretch reads YIPKSALAAVIITAVTPLFDV. Topologically, residues 405–417 are extracellular; the sequence is KIFRSLWRVQRLD. The helical transmembrane segment at 418–438 threads the bilayer; sequence LLPLCVTFLLSFWEIQYGILA. The Cytoplasmic portion of the chain corresponds to 439–593; that stretch reads GSLVSLLILL…SSLLKSPSGP (155 aa). The 114-residue stretch at 453–566 folds into the STAS domain; that stretch reads RPKTQVSEGQ…EEAEKFLQQE (114 aa). Residues 564–593 form a disordered region; the sequence is QQEPGTEPNSIHEDAVPEQRSSLLKSPSGP. The span at 582–593 shows a compositional bias: polar residues; sequence QRSSLLKSPSGP.

It belongs to the SLC26A/SulP transporter (TC 2.A.53) family. As to expression, abundantly expressed in the cerebellum, with a predominant expression in Purkinje cells (at protein level). Predominantly expressed in the kidney and brain. In the kidney localizes in collecting duct intercalated cells (at protein level). In terms of tissue distribution, predominantly expressed in the brain with lower levels in the kidney.

It is found in the cell membrane. Its subcellular location is the lysosome membrane. The protein localises to the apical cell membrane. The protein resides in the basolateral cell membrane. It catalyses the reaction hydrogencarbonate(in) + chloride(out) = hydrogencarbonate(out) + chloride(in). The catalysed reaction is sulfate(in) + H(+)(in) = sulfate(out) + H(+)(out). The enzyme catalyses oxalate(in) + chloride(out) = oxalate(out) + chloride(in). Its function is as follows. Sodium-independent anion exchanger mediating bicarbonate, chloride, sulfate and oxalate transport. Exhibits sodium-independent sulfate anion transporter activity that may cooperate with SLC26A2 to mediate DIDS-sensitive sulfate uptake into high endothelial venules endothelial cells (HEVEC). In the kidney, mediates chloride-bicarbonate exchange, facilitating V-ATPase-mediated acid secretion. May function as a chloride channel, playing an important role in moderating chloride homeostasis and neuronal activity in the cerebellum. The sequence is that of Sodium-independent sulfate anion transporter from Mus musculus (Mouse).